A 1241-amino-acid polypeptide reads, in one-letter code: Phosphorylase b kinase regulatory subunit alpha, skeletal muscle isoform (1241 aa).

A phosphoserine mark is found at Ser629, Ser730, Ser736, Ser739, Ser759, Ser812, Ser973, Ser982, and Ser986. The interval 811–841 (LSELYVKVGEIRHWGLIRYISGILRKKVEAL) is calmodulin-binding. Ser1008 carries the phosphoserine; by autocatalysis modification. Ser1019 carries the post-translational modification Phosphoserine; by PKA. Phosphoserine is present on residues Ser1021 and Ser1024. A calmodulin-binding region spans residues 1064 to 1104 (SKDSRQGQWQRRRRLDGALNRVPIGFYQKVWKILQKCHGLS). Ser1131 carries the post-translational modification Phosphoserine. A lipid anchor (S-farnesyl cysteine) is attached at Cys1238.

The protein belongs to the phosphorylase b kinase regulatory chain family. As to quaternary structure, hexadecamer of 4 heterotetramers, each composed of alpha, beta, gamma, and delta subunits. Alpha (PHKA1 or PHKA2) and beta (PHKB) are regulatory subunits, gamma (PHKG1 or PHKG2) is the catalytic subunit, and delta is calmodulin. In terms of processing, although the final Cys may be farnesylated, the terminal tripeptide is probably not removed, and the C-terminus is not methylated. Both isoforms are expressed in muscle.

It is found in the cell membrane. It functions in the pathway glycan biosynthesis; glycogen metabolism. By phosphorylation of various serine residues and by calcium. Functionally, phosphorylase b kinase catalyzes the phosphorylation of serine in certain substrates, including troponin I. The alpha chain may bind calmodulin. This Mus musculus (Mouse) protein is Phosphorylase b kinase regulatory subunit alpha, skeletal muscle isoform (Phka1).